Here is an 881-residue protein sequence, read N- to C-terminus: Ent-kaurene synthase CPS/KS, chloroplastic (881 aa).

The transit peptide at 1-41 directs the protein to the chloroplast; it reads MASSTLIQNRSCGVTSSMSSFQIFRGQPLRFPGTRTPAAVQ. Aspartate 417, aspartate 419, aspartate 635, aspartate 639, asparagine 778, aspartate 779, and glutamate 786 together coordinate Mg(2+). The DXDDTA motif motif lies at 417-422; that stretch reads DVDDTA. The DDXXD motif signature appears at 635–639; it reads DDYFD.

This sequence belongs to the terpene synthase family. Mg(2+) is required as a cofactor.

The protein localises to the plastid. Its subcellular location is the chloroplast. It catalyses the reaction (2E,6E,10E)-geranylgeranyl diphosphate = ent-copalyl diphosphate. It carries out the reaction ent-copalyl diphosphate = ent-kaur-16-ene + diphosphate. The catalysed reaction is ent-copalyl diphosphate = ent-beyerene + diphosphate. The enzyme catalyses ent-copalyl diphosphate = ent-sandaracopimara-8(14),15-diene + diphosphate. It catalyses the reaction ent-copalyl diphosphate = ent-isokaurene + diphosphate. It carries out the reaction ent-copalyl diphosphate + H2O = 16alpha-hydroxy-ent-kaurene + diphosphate. Its pathway is secondary metabolite biosynthesis; terpenoid biosynthesis. In terms of biological role, bifunctional copalyl diphosphate/kaurene synthase involved in the biosynthesis of labdane-related diterpenoids (LRDs) natural products such as ent-beyerene, an antimicrobial compound. Supports the conversion of geranylgeranyl diphosphate (GGPP) to ent-copalyl diphosphate (ent-CDP). Also catalyzes the subsequent cyclization of ent-CDP into many diterpenes, including ent-kaur-16-ene as the major product, and ent-beyerene, ent-sandaracopimaradiene, ent-kaur-15-ene (ent-isokaurene) and 16-hydroxy-ent-kaurene (ent-16-alpha-hydroxy-kaurene) as minor products. In Physcomitrium patens (Spreading-leaved earth moss), this protein is Ent-kaurene synthase CPS/KS, chloroplastic.